Reading from the N-terminus, the 667-residue chain is MNGSGSTAKESLFNPTPRKLGLPEDNTMTPYNGVRSIFDNSSGSRQLTDEHTNQERAISKAKLADENIAPFLAKHIPSQYAPLGADASKTTGPPRPMNSRYCYRHRPDLKCRRQADEPSMDHLQWELQSLSQSDQQGIAHVWSLFSAAPAKQRELMLRGILAQCCFPQLSLISSSVRDLIRIDFITALPPEISFKILSYLDTASLCRAAQVSRAWKCLADDDVVWHRMCEQHIHRKCTKCGWGLPLLERKRLRASKEQIEKRALGVSVAPDSSTIAVQTVDATSGVKRTAEDLEGSDSQVVKRQRLPTEDTELHRTNVRPWKDVYKDRFKVGTNWKYGRCSVKVFKGHTNGVMCLQFEDNILATGSYDMTIKIWDMETGEELRTLTGHTSGIRCLQFDDTKLISGSIDRTLKVWNWRTGECISTYTGHLGGIIGLHFENSVLASGSIDNTVKIWNFEDKSTFLLRGHSDWVNAVRVDSASRTVLSASDDCTVKLWDLDSKQCIRTFQGHVGQVQQVIPLPKEFEFEEDHDAGHEEDSNASVSGDESPLRQEPCSPGASFFEGDRPAPPRYILTSALDSTIRLWETYSGRCLRTFFGHLEGVWALSADTLRIVSGAEDRMVKIWDPRTGKCERTFTGHSGPVTCVGLGDSCFVTGSEDCEVRIHSFKN.

The segment at 1–55 (MNGSGSTAKESLFNPTPRKLGLPEDNTMTPYNGVRSIFDNSSGSRQLTDEHTNQE) is disordered. The 47-residue stretch at 182–228 (IDFITALPPEISFKILSYLDTASLCRAAQVSRAWKCLADDDVVWHRM) folds into the F-box domain. WD repeat units lie at residues 347-386 (GHTN…RTLT), 388-426 (HTSG…STYT), 428-464 (HLGG…TFLL), 466-507 (GHSD…RTFQ), 549-593 (RQEP…CLRT), 594-633 (FFGH…CERT), and 636-667 (GHSG…SFKN). A disordered region spans residues 528–562 (DHDAGHEEDSNASVSGDESPLRQEPCSPGASFFEG).

It belongs to the WD repeat MET30/SCONB/SCON-2 family. Component of the SCF(sconB) E3 ubiquitin ligase complex.

It functions in the pathway protein modification; protein ubiquitination. In terms of biological role, component of the SCF(sconB) E3 ubiquitin ligase complex involved in the regulation of sulfur metabolite repression, probably by mediating the inactivation or degradation of the metR transcription factor. This is Probable E3 ubiquitin ligase complex SCF subunit sconB (sconB) from Talaromyces stipitatus (strain ATCC 10500 / CBS 375.48 / QM 6759 / NRRL 1006) (Penicillium stipitatum).